The following is a 329-amino-acid chain: Serine dehydratase-like (329 aa).

Methionine 1 is modified (N-acetylmethionine). At lysine 48 the chain carries N6-(pyridoxal phosphate)lysine.

Belongs to the serine/threonine dehydratase family. Monomer. Homodimer. The cofactor is pyridoxal 5'-phosphate. As to expression, expressed in lung cancer cell lines.

The enzyme catalyses L-serine = pyruvate + NH4(+). It carries out the reaction L-threonine = 2-oxobutanoate + NH4(+). It catalyses the reaction L-glutamate = D-glutamate. Catalyzes the pyridoxal-phosphate-dependent dehydrative deamination of L-threonine and L-serine to ammonia and alpha-ketobutyrate and pyruvate, respectively. Also exhibits racemase activity towards L-glutamate and D-glutamate. This Homo sapiens (Human) protein is Serine dehydratase-like (SDSL).